The sequence spans 124 residues: Late embryogenesis abundant protein 37 (124 aa).

A mitochondrion-targeting transit peptide spans 1–35 (MSQSLFNLKSLSRSINNTIRMRRYIVITKASQRAY).

It belongs to the LEA type 3 family.

The protein localises to the mitochondrion. The protein is Late embryogenesis abundant protein 37 of Arabidopsis thaliana (Mouse-ear cress).